We begin with the raw amino-acid sequence, 224 residues long: Transcriptional regulatory protein DltR (224 aa).

A Response regulatory domain is found at 2 to 116 (RLLVVEDEKS…ELLARIRLRT (115 aa)). The residue at position 51 (D51) is a 4-aspartylphosphate. The ompR/PhoB-type DNA-binding region spans 124 to 222 (ANQLRLGNIR…TKGFGYSLEE (99 aa)).

Phosphorylated by DltS.

The protein resides in the cytoplasm. Member of the two-component regulatory system DltS/DltR. Regulates the expression of the dlt operon. The sequence is that of Transcriptional regulatory protein DltR (dltR) from Streptococcus agalactiae serotype III (strain NEM316).